The following is a 316-amino-acid chain: 4-hydroxy-3-methylbut-2-enyl diphosphate reductase (316 aa).

C18 contributes to the [4Fe-4S] cluster binding site. The (2E)-4-hydroxy-3-methylbut-2-enyl diphosphate site is built by H47 and H80. Dimethylallyl diphosphate is bound by residues H47 and H80. The isopentenyl diphosphate site is built by H47 and H80. [4Fe-4S] cluster is bound at residue C102. H130 serves as a coordination point for (2E)-4-hydroxy-3-methylbut-2-enyl diphosphate. H130 contacts dimethylallyl diphosphate. Isopentenyl diphosphate is bound at residue H130. The Proton donor role is filled by E132. T171 provides a ligand contact to (2E)-4-hydroxy-3-methylbut-2-enyl diphosphate. Residue C201 participates in [4Fe-4S] cluster binding. Residues S229, S230, N231, and S274 each contribute to the (2E)-4-hydroxy-3-methylbut-2-enyl diphosphate site. Dimethylallyl diphosphate-binding residues include S229, S230, N231, and S274. Isopentenyl diphosphate is bound by residues S229, S230, N231, and S274.

The protein belongs to the IspH family. It depends on [4Fe-4S] cluster as a cofactor.

The enzyme catalyses isopentenyl diphosphate + 2 oxidized [2Fe-2S]-[ferredoxin] + H2O = (2E)-4-hydroxy-3-methylbut-2-enyl diphosphate + 2 reduced [2Fe-2S]-[ferredoxin] + 2 H(+). It catalyses the reaction dimethylallyl diphosphate + 2 oxidized [2Fe-2S]-[ferredoxin] + H2O = (2E)-4-hydroxy-3-methylbut-2-enyl diphosphate + 2 reduced [2Fe-2S]-[ferredoxin] + 2 H(+). It functions in the pathway isoprenoid biosynthesis; dimethylallyl diphosphate biosynthesis; dimethylallyl diphosphate from (2E)-4-hydroxy-3-methylbutenyl diphosphate: step 1/1. The protein operates within isoprenoid biosynthesis; isopentenyl diphosphate biosynthesis via DXP pathway; isopentenyl diphosphate from 1-deoxy-D-xylulose 5-phosphate: step 6/6. Its function is as follows. Catalyzes the conversion of 1-hydroxy-2-methyl-2-(E)-butenyl 4-diphosphate (HMBPP) into a mixture of isopentenyl diphosphate (IPP) and dimethylallyl diphosphate (DMAPP). Acts in the terminal step of the DOXP/MEP pathway for isoprenoid precursor biosynthesis. The sequence is that of 4-hydroxy-3-methylbut-2-enyl diphosphate reductase from Ruegeria sp. (strain TM1040) (Silicibacter sp.).